The following is a 215-amino-acid chain: Sodium channel regulatory subunit beta-3 (215 aa).

The signal sequence occupies residues 1-22; it reads MPAFNRLFPLASLVLIYWVSVC. Residues 23 to 156 lie on the Extracellular side of the membrane; that stretch reads FPVCVEVPSE…EEAGEDFTSV (134 aa). 2 cysteine pairs are disulfide-bonded: Cys-26–Cys-48 and Cys-45–Cys-120. Residues 32–154 enclose the Ig-like C2-type domain; it reads ETEAVQGNPM…VTEEAGEDFT (123 aa). 4 N-linked (GlcNAc...) asparagine glycosylation sites follow: Asn-95, Asn-109, Asn-113, and Asn-121. A helical transmembrane segment spans residues 157-178; that stretch reads VSEIMMYILLVFLTLWLLIEMI. The Cytoplasmic segment spans residues 179 to 215; that stretch reads YCYRKVSKAEEAAQENASDYLAIPSENKENSAVPVEE.

It belongs to the sodium channel auxiliary subunit SCN3B (TC 8.A.17) family. As to quaternary structure, a voltage-gated sodium (Nav) channel consists of an ion-conducting pore-forming alpha subunit functional on its own that is regulated by one or more beta subunits. Forms homodimers and homotrimers. SCN3B is non-covalently associated with alpha subunits and induces the formation of alpha subunit oligomers, including trimers. Interacts with SCN5A/Nav1.5; regulatory subunit of SCN5A/Nav1.5. Interacts with SCN7A/Nav2.1; probable regulatory subunit of SCN7A/Nav2.1. Interacts with SCN10A; regulatory subunit of SCN10A/Nav1.8. Interacts with NFASC; probably involved in targeting the sodium channels to the nodes of Ranvier. Post-translationally, intramolecular disulfide bonds favor the voltage-gated sodium channel oligomeric complex assembly. In terms of processing, N-glycosylated. As to expression, expressed in the atrium.

The protein resides in the cell membrane. Its function is as follows. Regulatory subunit of multiple voltage-gated sodium (Nav) channels directly mediating the depolarization of excitable membranes. Navs, also called VGSCs (voltage-gated sodium channels) or VDSCs (voltage-dependent sodium channels), operate by switching between closed and open conformations depending on the voltage difference across the membrane. In the open conformation they allow Na(+) ions to selectively pass through the pore, along their electrochemical gradient. The influx of Na+ ions provokes membrane depolarization, initiating the propagation of electrical signals throughout cells and tissues. The accessory beta subunits participate in localization and functional modulation of the Nav channels. Modulates the activity of SCN2A/Nav1.2, causing a hyperpolarizing shift in the voltage-dependence of inactivation of the channel and increasing the fraction of channels operating in the fast gating mode. Modulates the activity of SCN5A/Nav1.5. Could also regulate the atypical sodium channel SCN7A/Nav2.1. Modulates the activity of SCN10A/Nav1.8, regulating its oligomerization and accelerating the recovery from inactivation. This is Sodium channel regulatory subunit beta-3 from Homo sapiens (Human).